Reading from the N-terminus, the 124-residue chain is Putative ankyrin repeat protein RF_1087 (124 aa).

3 ANK repeats span residues N17 to I46, N50 to S79, and F83 to N112.

This chain is Putative ankyrin repeat protein RF_1087, found in Rickettsia felis (strain ATCC VR-1525 / URRWXCal2) (Rickettsia azadi).